We begin with the raw amino-acid sequence, 156 residues long: Transcriptional repressor NrdR (156 aa).

A zinc finger lies at 3-34 (CPSCQFNGTRVVDSRPVDDNKEIRRRRECESC). The ATP-cone domain maps to 49 to 139 (LVVVKKEGSR…VYRQFKDINV (91 aa)).

It belongs to the NrdR family. Zn(2+) is required as a cofactor.

In terms of biological role, negatively regulates transcription of bacterial ribonucleotide reductase nrd genes and operons by binding to NrdR-boxes. This chain is Transcriptional repressor NrdR, found in Lysinibacillus sphaericus (strain C3-41).